The chain runs to 225 residues: Class E basic helix-loop-helix protein 23 (225 aa).

The segment at 35–104 is disordered; sequence EAARGYGTPG…PREQRSLRLS (70 aa). The bHLH domain maps to 100 to 154; sequence SLRLSINARERRRMHDLNDALDGLRAVIPYAHSPSVRKLSKIATLLLAKNYILMQ.

Its subcellular location is the nucleus. May function as transcriptional repressor. May modulate the expression of genes required for the differentiation and/or maintenance of pancreatic and neuronal cell types. May be important for rod bipolar cell maturation. The sequence is that of Class E basic helix-loop-helix protein 23 (BHLHE23) from Homo sapiens (Human).